The sequence spans 157 residues: Large ribosomal subunit protein uL15 (157 aa).

Over residues 1-13 the composition is skewed to basic and acidic residues; sequence MKLNDLRDKDGAT. Residues 1 to 39 are disordered; that stretch reads MKLNDLRDKDGATHSKKRLGRGIGSGSGKTAGRGVKGQK. Over residues 21 to 35 the composition is skewed to gly residues; the sequence is RGIGSGSGKTAGRGV.

It belongs to the universal ribosomal protein uL15 family. Part of the 50S ribosomal subunit.

Binds to the 23S rRNA. This Mesorhizobium japonicum (strain LMG 29417 / CECT 9101 / MAFF 303099) (Mesorhizobium loti (strain MAFF 303099)) protein is Large ribosomal subunit protein uL15.